Consider the following 72-residue polypeptide: Large ribosomal subunit protein uL29 (72 aa).

Belongs to the universal ribosomal protein uL29 family.

The polypeptide is Large ribosomal subunit protein uL29 (Chlamydia abortus (strain DSM 27085 / S26/3) (Chlamydophila abortus)).